A 156-amino-acid polypeptide reads, in one-letter code: ATP synthase subunit b (156 aa).

A helical transmembrane segment spans residues 7–27 (LIGQTVAFIIFVWFCMKFVWP).

The protein belongs to the ATPase B chain family. In terms of assembly, F-type ATPases have 2 components, F(1) - the catalytic core - and F(0) - the membrane proton channel. F(1) has five subunits: alpha(3), beta(3), gamma(1), delta(1), epsilon(1). F(0) has three main subunits: a(1), b(2) and c(10-14). The alpha and beta chains form an alternating ring which encloses part of the gamma chain. F(1) is attached to F(0) by a central stalk formed by the gamma and epsilon chains, while a peripheral stalk is formed by the delta and b chains.

It localises to the cell inner membrane. In terms of biological role, f(1)F(0) ATP synthase produces ATP from ADP in the presence of a proton or sodium gradient. F-type ATPases consist of two structural domains, F(1) containing the extramembraneous catalytic core and F(0) containing the membrane proton channel, linked together by a central stalk and a peripheral stalk. During catalysis, ATP synthesis in the catalytic domain of F(1) is coupled via a rotary mechanism of the central stalk subunits to proton translocation. Component of the F(0) channel, it forms part of the peripheral stalk, linking F(1) to F(0). The protein is ATP synthase subunit b of Shewanella oneidensis (strain ATCC 700550 / JCM 31522 / CIP 106686 / LMG 19005 / NCIMB 14063 / MR-1).